The following is a 420-amino-acid chain: Na(+)/H(+) antiporter NhaA (420 aa).

11 consecutive transmembrane segments (helical) span residues 4 to 24 (VWNFITGYSLLLIGGAIIALI), 70 to 90 (DLLMALFFAIAAKEVWEAVIL), 104 to 124 (LVATLGGMVGPISIYLGIAYF), 132 to 152 (AVANGWAIPTATDIAFSYLVG), 165 to 185 (FLLLLAIADDAAGLLILAIFY), 192 to 212 (PAWLLLSFGAALGVYVLANWL), 233 to 250 (LSFWPYALAGCASWYGFM), 299 to 319 (VEIILGLFGLMNAGVAFSAMG), 323 to 343 (WLVLAGLLIGKPVGIFLFGWL), 361 to 381 (LVVIGCVAAIGFTVSLFVASV), and 395 to 415 (GALFSFGAAAVSIIVGKLTQV).

Belongs to the NhaA Na(+)/H(+) (TC 2.A.33) antiporter family.

It is found in the cell inner membrane. It catalyses the reaction Na(+)(in) + 2 H(+)(out) = Na(+)(out) + 2 H(+)(in). Its function is as follows. Na(+)/H(+) antiporter that extrudes sodium in exchange for external protons. This chain is Na(+)/H(+) antiporter NhaA, found in Jannaschia sp. (strain CCS1).